Consider the following 326-residue polypeptide: Vomeronasal type-1 receptor 100 (326 aa).

Topologically, residues methionine 1–threonine 32 are extracellular. A helical transmembrane segment spans residues phenylalanine 33–phenylalanine 53. The Cytoplasmic portion of the chain corresponds to lysine 54–leucine 70. The chain crosses the membrane as a helical span at residues leucine 71 to isoleucine 91. At serine 92–leucine 104 the chain is on the extracellular side. Cysteines 101 and 188 form a disulfide. Residues valine 105–alanine 127 traverse the membrane as a helical segment. The Cytoplasmic portion of the chain corresponds to isoleucine 128–serine 149. The chain crosses the membrane as a helical span at residues cysteine 150–isoleucine 170. The Extracellular portion of the chain corresponds to asparagine 171–aspartate 209. N-linked (GlcNAc...) asparagine glycosylation is present at asparagine 175. A helical transmembrane segment spans residues isoleucine 210–histidine 230. The Cytoplasmic segment spans residues arginine 231–glutamine 254. The helical transmembrane segment at threonine 255–cysteine 275 threads the bilayer. The Extracellular portion of the chain corresponds to serine 276 to threonine 285. The chain crosses the membrane as a helical span at residues serine 286–methionine 306. Residues serine 307–valine 326 lie on the Cytoplasmic side of the membrane.

The protein belongs to the G-protein coupled receptor 1 family. In terms of tissue distribution, expressed in 1-4% of neurons of the vomeronasal organ. Only one pheromone receptor gene may be expressed in a particular neuron. Not expressed in the main olfactory epithelium.

Its subcellular location is the cell membrane. Putative pheromone receptor implicated in the regulation of social as well as reproductive behavior. This is Vomeronasal type-1 receptor 100 (Vom1r100) from Rattus norvegicus (Rat).